Consider the following 330-residue polypeptide: BTB/POZ domain-containing adapter for CUL3-mediated RhoA degradation protein 1 (330 aa).

The segment at 1 to 34 is disordered; that stretch reads MSAEASGSSGGHAVTVSGSSPSSSSHVGEEKPGR. The region spanning 40 to 108 is the BTB domain; sequence KYVKLNVGGT…LRDGTVPLPD (69 aa). Residues 282–291 are compositionally biased toward low complexity; the sequence is GGVSSSGAGQ. Positions 282 to 304 are disordered; that stretch reads GGVSSSGAGQSEEEGAGAGGGDR.

This sequence belongs to the BACURD family.

It localises to the nucleus. In terms of biological role, substrate-specific adapter of a BCR (BTB-CUL3-RBX1) E3 ubiquitin-protein ligase complex required for synaptic transmission. The BCR(KCTD13) E3 ubiquitin ligase complex mediates the ubiquitination of RHOA, leading to its degradation by the proteasome, thereby regulating the actin cytoskeleton and promoting synaptic transmission. This is BTB/POZ domain-containing adapter for CUL3-mediated RhoA degradation protein 1 from Danio rerio (Zebrafish).